The following is a 259-amino-acid chain: 5'-nucleotidase SurE (259 aa).

Positions 8, 9, 40, and 92 each coordinate a divalent metal cation.

Belongs to the SurE nucleotidase family. The cofactor is a divalent metal cation.

It localises to the cytoplasm. The catalysed reaction is a ribonucleoside 5'-phosphate + H2O = a ribonucleoside + phosphate. Functionally, nucleotidase that shows phosphatase activity on nucleoside 5'-monophosphates. This is 5'-nucleotidase SurE from Xanthomonas axonopodis pv. citri (strain 306).